Reading from the N-terminus, the 397-residue chain is Cysteine desulfurase (397 aa).

Residues N148, Q176, and 196–198 (SAH) each bind pyridoxal 5'-phosphate. K199 is modified (N6-(pyridoxal phosphate)lysine). T234 lines the pyridoxal 5'-phosphate pocket. C321 functions as the Cysteine persulfide intermediate in the catalytic mechanism. [2Fe-2S] cluster is bound at residue C321.

Belongs to the class-V pyridoxal-phosphate-dependent aminotransferase family. NifS/IscS subfamily. As to quaternary structure, homodimer. It depends on pyridoxal 5'-phosphate as a cofactor.

It carries out the reaction (sulfur carrier)-H + L-cysteine = (sulfur carrier)-SH + L-alanine. Its function is as follows. Catalyzes the removal of elemental sulfur atoms from cysteine to produce alanine. Seems to participate in the biosynthesis of the nitrogenase metalloclusters by providing the inorganic sulfur required for the Fe-S core formation. The sequence is that of Cysteine desulfurase from Klebsiella pneumoniae.